A 243-amino-acid chain; its full sequence is Putative ABC transporter arginine-binding protein 2 (243 aa).

The first 19 residues, 1–19, serve as a signal peptide directing secretion; that stretch reads MKKVLIAALIAGFSLSATA.

The protein belongs to the bacterial solute-binding protein 3 family. The complex is composed of two ATP-binding proteins (ArtP), two transmembrane proteins (ArtM and ArtQ) and two solute-binding proteins (ArtJ and ArtI).

Its subcellular location is the periplasm. Its function is as follows. Part of the ABC transporter complex ArtPIQMJ involved in arginine transport. This chain is Putative ABC transporter arginine-binding protein 2 (artI), found in Escherichia coli (strain K12).